The chain runs to 299 residues: Protease HtpX homolog (299 aa).

Transmembrane regions (helical) follow at residues 19 to 39 and 41 to 61; these read LFIV…VWYF and WGIT…WIAY. H146 contacts Zn(2+). The active site involves E147. H150 provides a ligand contact to Zn(2+). Helical transmembrane passes span 156 to 176 and 198 to 218; these read ILLM…RDVF and IILL…VLII. Zn(2+) is bound at residue E227.

The protein belongs to the peptidase M48B family. Zn(2+) serves as cofactor.

The protein localises to the cell membrane. The polypeptide is Protease HtpX homolog (Caldanaerobacter subterraneus subsp. tengcongensis (strain DSM 15242 / JCM 11007 / NBRC 100824 / MB4) (Thermoanaerobacter tengcongensis)).